A 393-amino-acid polypeptide reads, in one-letter code: Protein TsgA (393 aa).

Transmembrane regions (helical) follow at residues 11–31, 51–71, 78–98, 101–121, 134–154, 162–182, 206–226, 245–265, 273–293, 297–317, 332–352, and 361–381; these read WISF…GMVM, FLNA…EIVP, FGFL…SLAL, AAMF…TFLI, LLFT…IAAF, WYWV…LTFG, IGVL…LGFI, TLVS…SFIL, ILTV…TGTP, AWSI…IITL, FVLT…GPIV, and LLTA…LGFV.

Belongs to the major facilitator superfamily. TsgA family.

It is found in the cell inner membrane. This is Protein TsgA from Shigella dysenteriae serotype 1 (strain Sd197).